The sequence spans 2376 residues: Reducing polyketide synthase DEP5 (2376 aa).

In terms of domain architecture, Ketosynthase family 3 (KS3) spans 47–477 (LEPIAVVGMG…GTNAHTIIES (431 aa)). Residues Cys-221, His-358, and His-399 each act as for beta-ketoacyl synthase activity in the active site. The segment at 593-906 (VFTGQGAQWA…QYLPTLVRGF (314 aa)) is malonyl-CoA:ACP transacylase (MAT) domain. The active-site For malonyltransferase activity is Ser-685. The tract at residues 983–1121 (HDVLGQLTTG…GSIAIRTSAR (139 aa)) is N-terminal hotdog fold. The dehydratase (DH) domain stretch occupies residues 983–1158 (HDVLGQLTTG…FNYGPTFQDM (176 aa)). One can recognise a PKS/mFAS DH domain in the interval 983-1286 (HDVLGQLTTG…CIAYEAAIPQ (304 aa)). Residue His-1015 is the Proton acceptor; for dehydratase activity of the active site. Positions 1131–1286 (LPQRASGRLW…CIAYEAAIPQ (156 aa)) are C-terminal hotdog fold. The active-site Proton donor; for dehydratase activity is the Asp-1195. Positions 1659 to 1964 (GRIQAGKVVF…DSICDNKIVI (306 aa)) are enoyl reductase (ER) domain. Residues 1988–2163 (ATYLLVGCLG…KPACAVVLPM (176 aa)) form a ketoreductase (KR) domain region. Residues 2289–2368 (DLVRDHFIAK…KFSELVCGAQ (80 aa)) form the Carrier domain. Position 2327 is an O-(pantetheine 4'-phosphoryl)serine (Ser-2327).

Its pathway is polyketide biosynthesis. Functionally, reducing polyketide synthase; part of the gene cluster that mediates the biosynthesis of depudecin, a highly oxidized eleven-carbon linear polyketide that acts as a histone deacetylase (HDAC) inhibitor and makes a small contribution to pathogenesis. The reducing polyketide synthase DEP5 is the central enzyme in depudecin biosynthesis by yielding the backbone polyketide chain. The monooxygenases DEP2 and DEP4, as well as the uncharacterized protein DEP1, then act as tailoring enzymes to modify the intermediate polyketide chain into depudecin. The protein is Reducing polyketide synthase DEP5 of Alternaria brassicicola (Dark leaf spot agent).